Reading from the N-terminus, the 888-residue chain is 3-hydroxy-3-methylglutaryl-coenzyme A reductase (888 aa).

Residues 1 to 9 (MLSRLFRMH) lie on the Cytoplasmic side of the membrane. A helical membrane pass occupies residues 10–39 (GLFVASHPWEVIVGTVTLTICMMSMNMFTG). Residues 40–56 (NNKICGWNYECPKFEED) are Lumenal-facing. A helical transmembrane segment spans residues 57–78 (VLSSDIIILTITRCIAILYIYF). One can recognise an SSD domain in the interval 61 to 218 (DIIILTITRC…MTFFPACVSL (158 aa)). The short motif at 75–78 (YIYF) is the INSIG-binding motif element. The Cytoplasmic segment spans residues 79 to 89 (QFQNLRQLGSK). Lys-89 participates in a covalent cross-link: Glycyl lysine isopeptide (Lys-Gly) (interchain with G-Cter in ubiquitin). Residues 90–114 (YILGIAGLFTIFSSFVFSTVVIHFL) traverse the membrane as a helical segment. Residues 115 to 123 (DKELTGLNE) are Lumenal-facing. The chain crosses the membrane as a helical span at residues 124-149 (ALPFFLLLIDLSRASTLAKFALSSNS). At 150 to 159 (QDEVRENIAR) the chain is on the cytoplasmic side. A helical transmembrane segment spans residues 160-187 (GMAILGPTFTLDALVECLVIGVGTMSGV). At 188–191 (RQLE) the chain is on the lumenal side. Residues 192–220 (IMCCFGCMSVLANYFVFMTFFPACVSLVL) traverse the membrane as a helical segment. Topologically, residues 221-248 (ELSRESREGRPIWLLSHFARVLEEEENK) are cytoplasmic. Residue Lys-248 forms a Glycyl lysine isopeptide (Lys-Gly) (interchain with G-Cter in ubiquitin) linkage. Residues 249–275 (PNPVTQRVKMIMSLGLVLVHAHSRWIA) form a helical membrane-spanning segment. At 276 to 314 (DPSPQNSTADTSKVSLGLDENVSKRIEPSVSLWQFYLSK) the chain is on the lumenal side. N-linked (GlcNAc...) asparagine glycosylation is found at Asn-281 and Asn-296. The helical transmembrane segment at 315 to 339 (MISMDIEQVITLSLALLLAVKYIFF) threads the bilayer. Over 340–888 (EQTETESTLS…LQGACTKKTA (549 aa)) the chain is Cytoplasmic. Catalysis depends on charge relay system residues Glu-559, Lys-691, and Asp-767. His-866 serves as the catalytic Proton donor. Phosphoserine; by AMPK is present on Ser-872.

Belongs to the HMG-CoA reductase family. In terms of assembly, homotetramer. Homodimer. Interacts (via its SSD) with INSIG1; the interaction, accelerated by sterols, leads to the recruitment of HMGCR to AMFR/gp78 for its ubiquitination by the sterol-mediated ERAD pathway. Interacts with UBIAD1. Post-translationally, undergoes sterol-mediated ubiquitination and ER-associated degradation (ERAD). Accumulation of sterols in the endoplasmic reticulum (ER) membrane, triggers binding of the reductase to the ER membrane protein INSIG1 or INSIG2. The INSIG1 binding leads to the recruitment of the ubiquitin ligase, AMFR/gp78, RNF139 or RNF145, initiating ubiquitination of the reductase. The ubiquitinated reductase is then extracted from the ER membrane and delivered to cytosolic 26S proteosomes by a mechanism probably mediated by the ATPase Valosin-containing protein VCP/p97. The INSIG2-binding leads to the recruitment of the ubiquitin ligase RNF139, initiating ubiquitination of the reductase. Lys-248 is the main site of ubiquitination. Ubiquitination is enhanced by the presence of a geranylgeranylated protein. In terms of processing, N-glycosylated. Deglycosylated by NGLY1 on release from the endoplasmic reticulum (ER) in a sterol-mediated manner. Phosphorylated. Phosphorylation at Ser-872 reduces the catalytic activity.

The protein localises to the endoplasmic reticulum membrane. Its subcellular location is the peroxisome membrane. The catalysed reaction is (R)-mevalonate + 2 NADP(+) + CoA = (3S)-3-hydroxy-3-methylglutaryl-CoA + 2 NADPH + 2 H(+). It functions in the pathway metabolic intermediate biosynthesis; (R)-mevalonate biosynthesis; (R)-mevalonate from acetyl-CoA: step 3/3. Its activity is regulated as follows. Regulated by a negative feedback mechanism through sterols and non-sterol metabolites derived from mevalonate. Phosphorylation at Ser-872 down-regulates the catalytic activity. Functionally, catalyzes the conversion of (3S)-hydroxy-3-methylglutaryl-CoA (HMG-CoA) to mevalonic acid, the rate-limiting step in the synthesis of cholesterol and other isoprenoids, thus plays a critical role in cellular cholesterol homeostasis. In Pongo abelii (Sumatran orangutan), this protein is 3-hydroxy-3-methylglutaryl-coenzyme A reductase (HMGCR).